The chain runs to 145 residues: 3-hydroxyacyl-[acyl-carrier-protein] dehydratase FabZ (145 aa).

H51 is a catalytic residue.

The protein belongs to the thioester dehydratase family. FabZ subfamily.

The protein resides in the cytoplasm. The catalysed reaction is a (3R)-hydroxyacyl-[ACP] = a (2E)-enoyl-[ACP] + H2O. Functionally, involved in unsaturated fatty acids biosynthesis. Catalyzes the dehydration of short chain beta-hydroxyacyl-ACPs and long chain saturated and unsaturated beta-hydroxyacyl-ACPs. The polypeptide is 3-hydroxyacyl-[acyl-carrier-protein] dehydratase FabZ (Staphylococcus haemolyticus (strain JCSC1435)).